The sequence spans 136 residues: MLQPKRMKFRKMFKGRNRGLANGTEVSFGDFGLKAVGRGRLTARQIEAARRAMTRHIKRQGQIWIRVFPDKPITSKPLEVRMGKGKGNVEYWVCQIQPGKVLYEMDGVSEELAREAFALAAAKLPLKTTFVTKTVM.

The protein belongs to the universal ribosomal protein uL16 family. In terms of assembly, part of the 50S ribosomal subunit.

Functionally, binds 23S rRNA and is also seen to make contacts with the A and possibly P site tRNAs. This Shewanella woodyi (strain ATCC 51908 / MS32) protein is Large ribosomal subunit protein uL16.